A 193-amino-acid polypeptide reads, in one-letter code: Cytidylate kinase (193 aa).

12–20 (GLPGSGTTT) provides a ligand contact to ATP.

The protein belongs to the cytidylate kinase family. Type 2 subfamily.

It localises to the cytoplasm. It carries out the reaction CMP + ATP = CDP + ADP. The enzyme catalyses dCMP + ATP = dCDP + ADP. In Methanopyrus kandleri (strain AV19 / DSM 6324 / JCM 9639 / NBRC 100938), this protein is Cytidylate kinase.